Here is a 160-residue protein sequence, read N- to C-terminus: Protein-export protein SecB (160 aa).

This sequence belongs to the SecB family. As to quaternary structure, homotetramer, a dimer of dimers. One homotetramer interacts with 1 SecA dimer.

Its subcellular location is the cytoplasm. In terms of biological role, one of the proteins required for the normal export of preproteins out of the cell cytoplasm. It is a molecular chaperone that binds to a subset of precursor proteins, maintaining them in a translocation-competent state. It also specifically binds to its receptor SecA. The sequence is that of Protein-export protein SecB from Azorhizobium caulinodans (strain ATCC 43989 / DSM 5975 / JCM 20966 / LMG 6465 / NBRC 14845 / NCIMB 13405 / ORS 571).